A 299-amino-acid chain; its full sequence is GTPase Era (299 aa).

The 168-residue stretch at Lys-5–Glu-172 folds into the Era-type G domain. Positions Gly-13 to Ser-20 are G1. Gly-13–Ser-20 is a GTP binding site. A G2 region spans residues Gln-39 to Asn-43. The tract at residues Asp-60 to Gly-63 is G3. GTP-binding positions include Asp-60–Ile-64 and Asn-122–Asp-125. Residues Asn-122–Asp-125 are G4. The G5 stretch occupies residues Ile-151–Ala-153. The KH type-2 domain occupies Thr-203–Arg-280.

The protein belongs to the TRAFAC class TrmE-Era-EngA-EngB-Septin-like GTPase superfamily. Era GTPase family. Monomer.

It localises to the cytoplasm. It is found in the cell membrane. Its function is as follows. An essential GTPase that binds both GDP and GTP, with rapid nucleotide exchange. Plays a role in 16S rRNA processing and 30S ribosomal subunit biogenesis and possibly also in cell cycle regulation and energy metabolism. The sequence is that of GTPase Era from Staphylococcus aureus (strain bovine RF122 / ET3-1).